The following is a 158-amino-acid chain: Large ribosomal subunit protein mL50 (158 aa).

It belongs to the mitochondrion-specific ribosomal protein mL50 family. In terms of assembly, component of the mitochondrial ribosome large subunit (39S) which comprises a 16S rRNA and about 50 distinct proteins.

It localises to the mitochondrion. In Pongo abelii (Sumatran orangutan), this protein is Large ribosomal subunit protein mL50 (MRPL50).